The following is a 146-amino-acid chain: MNRFLSHVTNRIDAKGRVSVPSVFRAVLLEAGVRELYCFQDFVFPAISVGGPELLDRFEKQMAAEDPFSDAANEMSLLVHGGGVYVKLDPEGRLMVTDFIRDFTGISNDVTFVGRGDHFQLWDPQAFARAQAEAREGRKQRGLRSQ.

2 SpoVT-AbrB domains span residues 7 to 54 and 83 to 126; these read HVTN…GPEL and GVYV…DPQA.

This sequence belongs to the MraZ family. Forms oligomers.

The protein resides in the cytoplasm. It is found in the nucleoid. This chain is Transcriptional regulator MraZ, found in Rhizobium meliloti (strain 1021) (Ensifer meliloti).